The chain runs to 338 residues: Nuclear hormone receptor family member nhr-52 (338 aa).

Positions 1–75 (MKCLVCCSYA…IGMRFSEPKQ (75 aa)) form a DNA-binding region, nuclear receptor. NR C4-type zinc fingers lie at residues 3–23 (CLVC…CSAC) and 39–63 (CKYD…FKKC). One can recognise an NR LBD domain in the interval 98-337 (KDGVHYSNFL…KKLVNDIIIR (240 aa)).

It belongs to the nuclear hormone receptor family.

It is found in the nucleus. In terms of biological role, orphan nuclear receptor. This is Nuclear hormone receptor family member nhr-52 (nhr-52) from Caenorhabditis elegans.